Consider the following 235-residue polypeptide: 7-cyano-7-deazaguanine synthase (235 aa).

An ATP-binding site is contributed by 11-21 (FSGGQDSTTCV). Cys199, Cys214, Cys217, and Cys220 together coordinate Zn(2+).

This sequence belongs to the QueC family. Zn(2+) serves as cofactor.

The catalysed reaction is 7-carboxy-7-deazaguanine + NH4(+) + ATP = 7-cyano-7-deazaguanine + ADP + phosphate + H2O + H(+). Its pathway is purine metabolism; 7-cyano-7-deazaguanine biosynthesis. In terms of biological role, catalyzes the ATP-dependent conversion of 7-carboxy-7-deazaguanine (CDG) to 7-cyano-7-deazaguanine (preQ(0)). The sequence is that of 7-cyano-7-deazaguanine synthase from Janthinobacterium sp. (strain Marseille) (Minibacterium massiliensis).